Consider the following 242-residue polypeptide: uncharacterized protein (242 aa).

Belongs to the IIV-6 415R family.

This is an uncharacterized protein from Invertebrate iridescent virus 6 (IIV-6).